The primary structure comprises 403 residues: ATP phosphoribosyltransferase regulatory subunit (403 aa).

Belongs to the class-II aminoacyl-tRNA synthetase family. HisZ subfamily. Heteromultimer composed of HisG and HisZ subunits.

The protein resides in the cytoplasm. The protein operates within amino-acid biosynthesis; L-histidine biosynthesis; L-histidine from 5-phospho-alpha-D-ribose 1-diphosphate: step 1/9. Required for the first step of histidine biosynthesis. May allow the feedback regulation of ATP phosphoribosyltransferase activity by histidine. The polypeptide is ATP phosphoribosyltransferase regulatory subunit (Nostoc punctiforme (strain ATCC 29133 / PCC 73102)).